Here is a 271-residue protein sequence, read N- to C-terminus: Orotidine 5'-phosphate decarboxylase (271 aa).

The active-site Proton donor is Lys-95.

It belongs to the OMP decarboxylase family. Type 2 subfamily.

The enzyme catalyses orotidine 5'-phosphate + H(+) = UMP + CO2. It functions in the pathway pyrimidine metabolism; UMP biosynthesis via de novo pathway; UMP from orotate: step 2/2. The protein is Orotidine 5'-phosphate decarboxylase of Janthinobacterium sp. (strain Marseille) (Minibacterium massiliensis).